Here is a 475-residue protein sequence, read N- to C-terminus: MAAPGWGRWVLGLGPLLLQVFLPFQLVAGRWGPEGAGGGVRRGLAEPSVVAKHEDSLFKDLFQDYERWVRPVEHLNDRIKIKFGLAISQLVDVDEKNQLMTTNVWLKQEWIDVKLRWNPDDYGGIKLIRVPSDSLWTPDIVLFDNADGRFEGASTKTVVRYDGTVTWTPPANYKSSCTIDVTFFPFDLQNCSMKFGSWTYDGSQVDIILEDQDVDKRDFFDNGEWEIVSATGSKGNRTDSCCWYPYITYSFVIKRLPLFYTLFLIIPCIGLSFLTVLVFYLPSNEGEKICLCTSVLVSLTVFLLVIEEIIPSSSKVIPLIGEYLVFTMIFVTLSIMVTVFAINIHHRSSSTHDAMAPWVRKIFLHKLPKLLCMRSHVDRYFSQKEEARSSRGPRSSRNALEAALDSVRYITRHVMKETDVREVVEDWKFIAQVLDRMFLWTFLLVSVVGSLGLFVPVIYKWANIIVPIHIGNENK.

Residues 1-29 form the signal peptide; the sequence is MAAPGWGRWVLGLGPLLLQVFLPFQLVAG. At 30–261 the chain is on the extracellular side; the sequence is RWGPEGAGGG…VIKRLPLFYT (232 aa). The cysteines at positions 177 and 191 are disulfide-linked. Residues Asn190 and Asn236 are each glycosylated (N-linked (GlcNAc...) asparagine). The cysteines at positions 241 and 242 are disulfide-linked. 3 helical membrane-spanning segments follow: residues 262–282, 289–309, and 324–344; these read LFLIIPCIGLSFLTVLVFYLP, ICLCTSVLVSLTVFLLVIEEI, and LVFTMIFVTLSIMVTVFAINI. The Cytoplasmic segment spans residues 345-437; it reads HHRSSSTHDA…KFIAQVLDRM (93 aa). Residues 438 to 458 form a helical membrane-spanning segment; that stretch reads FLWTFLLVSVVGSLGLFVPVI. At 459–475 the chain is on the extracellular side; it reads YKWANIIVPIHIGNENK.

This sequence belongs to the ligand-gated ion channel (TC 1.A.9) family. Acetylcholine receptor (TC 1.A.9.1) subfamily. Alpha-5/CHRNA5 sub-subfamily. In terms of assembly, neuronal AChR that forms heteropentamers composed of two different type of subunits: alpha and non-alpha (beta). CHRNA5/alpha-5 subunit is only able to form functional nAChRs when co-assembled with another alpha subunit, can be combined to CHRNA4/alpha-4 or CHRNA3/alpha-3 and CHRNB4/beta-4 or CHRNB2/beta-2 to give rise to functional receptors. Interacts with LYPD6.

It localises to the synaptic cell membrane. Its subcellular location is the cell membrane. It catalyses the reaction Ca(2+)(in) = Ca(2+)(out). The enzyme catalyses K(+)(in) = K(+)(out). The catalysed reaction is Na(+)(in) = Na(+)(out). Its activity is regulated as follows. Activated by a myriad of ligands such as acetylcholine, cytisine, nicotine, choline and epibatidine. Component of neuronal acetylcholine receptors (nAChRs) that function as pentameric, ligand-gated cation channels with high calcium permeability among other activities. nAChRs are excitatory neurotrasnmitter receptors formed by a collection of nAChR subunits known to mediate synaptic transmission in the nervous system and the neuromuscular junction. Each nAchR subunit confers differential attributes to channel properties, including activation, deactivation and desensitization kinetics, pH sensitivity, cation permeability, and binding to allosteric modulators. Has an accessory rather than functional role and is only able to form functional nAChRs when co-assembled with another beta subunit. Participates in pentameric assemblies along with CHRNA3, CHRNA4, CHRNB2 and CHRNB4. Increases receptor sensitivity to acetylcholine and nicotine when associated with CHRNA4 and CHRNB2. Plays a role in nicotine addiction. This is Neuronal acetylcholine receptor subunit alpha-5 (CHRNA5) from Bos taurus (Bovine).